Here is a 793-residue protein sequence, read N- to C-terminus: MGVWLNKDDFIRDLKRISLCLLILYVVVVVGTDQNFYSLLGVSKTASSREIRQAFKKLALKLHPDKNPNNPNAHGDFLKINRAYEVLKDEDLRKKYDKYGEKGLEDNQGGQYESWSYYRYDFGIYDDDPEIITLERREFDAAVNSGELWFVNFYSPGCSHCHDLAPTWREFAKEVDGLLRIGAVNCGDDRMLCRMKGVNSYPSLFIFRSGMAAVKYNGDRSKESLVAFAMQHVRSTVTELSTGNFVNAIETAFAAGVGWLITFCSKGEDCLTSQTRLRLSGMLDGLVNVGWVDCDAQDSLCKSLDTTASTTAYFPPGATLNDREKSSVLFLNSLDAKEIYMEIIHNLPDFELLSANQLEDRLAHHRWLVFFHFGKNENANDPELKKLKTLLKNEHIQVGRFDCSSAPGICSDLYVFQPCLAVFKGQGTKEYEIHHGKKILYDILAFAKESVNSHVTTLGPQNFPASDKEPWLVDFFAPWCPPCRALLPELRKASTLLYGQLKVGTLDCTIHEGLCNMYNIQAYPTTVVFNQSSIHEYEGHHSAEQILEFIEDLRNPSVVSLTPSTFNELVKQRKHDEVWMVDFYSPWCHPCQVLMPEWKRMARTLTGLINVGSVDCQQYHSFCTQENVQRYPEIRFYPQKSSKAYQYHSYNGWNRDAYSLRSWGLGFLPQASIDLTPQTFNEKVLQGKTHWVVDFYAPWCGPCQNFAPEFELLARMIKGKVRAGKVDCQAYPQTCQKAGIKAYPSVKLYQYERAKKSIWEEQINSRDAKTIAALIYGKLETLQSQVKRNKDEL.

The signal sequence occupies residues 1–32 (MGVWLNKDDFIRDLKRISLCLLILYVVVVVGT). In terms of domain architecture, J spans 35-100 (NFYSLLGVSK…DLRKKYDKYG (66 aa)). Residues 130–232 (EIITLERREF…ESLVAFAMQH (103 aa)) form the Thioredoxin 1 domain. A disulfide bridge connects residues cysteine 158 and cysteine 161. 2 trxb regions span residues 235-350 (STVT…LPDF) and 348-463 (PDFE…PQNF). 3 consecutive Thioredoxin domains span residues 454–553 (HVTT…IEDL), 557–665 (SVVS…SWGL), and 671–776 (ASID…ALIY). A disulfide bridge links cysteine 480 with cysteine 483. N-linked (GlcNAc...) asparagine glycosylation is present at asparagine 530. Disulfide bonds link cysteine 588/cysteine 591 and cysteine 700/cysteine 703. The short motif at 790–793 (KDEL) is the Prevents secretion from ER element.

In terms of assembly, interacts with HSPA5 (via its J domain). Interacts with EDEM1. As to expression, ubiquitous. Particularly abundant in secretory tissues. Ubiquitous in fetal tissues and tumor tissues. Higher expression in fetal tissues than in adult tissues. Expressed in testis, pancreas, fetal thymus and fetal kidney. High expression in heart, liver, kidney, and testis. Low expression in spleen and skeletal muscle.

The protein localises to the endoplasmic reticulum lumen. Endoplasmic reticulum disulfide reductase involved both in the correct folding of proteins and degradation of misfolded proteins. Required for efficient folding of proteins in the endoplasmic reticulum by catalyzing the removal of non-native disulfide bonds formed during the folding of proteins, such as LDLR. Also involved in endoplasmic reticulum-associated degradation (ERAD) by reducing incorrect disulfide bonds in misfolded glycoproteins recognized by EDEM1. Interaction with HSPA5 is required its activity, not for the disulfide reductase activity, but to facilitate the release of DNAJC10 from its substrate. Promotes apoptotic signaling pathway in response to endoplasmic reticulum stress. The protein is DnaJ homolog subfamily C member 10 (Dnajc10) of Mus musculus (Mouse).